Consider the following 149-residue polypeptide: Deoxyuridine 5'-triphosphate nucleotidohydrolase (149 aa).

Substrate-binding positions include 68 to 70 (RSG), Asn81, 85 to 87 (LID), and Met95.

The protein belongs to the dUTPase family. Requires Mg(2+) as cofactor.

The enzyme catalyses dUTP + H2O = dUMP + diphosphate + H(+). It functions in the pathway pyrimidine metabolism; dUMP biosynthesis; dUMP from dCTP (dUTP route): step 2/2. This enzyme is involved in nucleotide metabolism: it produces dUMP, the immediate precursor of thymidine nucleotides and it decreases the intracellular concentration of dUTP so that uracil cannot be incorporated into DNA. In Bordetella bronchiseptica (strain ATCC BAA-588 / NCTC 13252 / RB50) (Alcaligenes bronchisepticus), this protein is Deoxyuridine 5'-triphosphate nucleotidohydrolase.